We begin with the raw amino-acid sequence, 444 residues long: Nuclear distribution protein PAC1 (444 aa).

The stretch at 59–87 (TAIARLQRRIMSLEQNIRDLREASIEMNA) forms a coiled coil. 7 WD repeats span residues 113-152 (TLES…LPLA), 156-199 (AHTR…KLLR), 204-251 (HEHV…CLKS), 254-293 (PHSD…SVGL), 307-347 (SLQD…RLPQ), 367-406 (GHDS…KKWN), and 408-444 (IHQG…IFMQ).

The protein belongs to the WD repeat LIS1/nudF family. As to quaternary structure, self-associates. Interacts with NDL1 and dynein.

It localises to the cytoplasm. The protein localises to the cytoskeleton. Its subcellular location is the spindle pole. Positively regulates the activity of the minus-end directed microtubule motor protein dynein. Plays a central role in positioning the mitotic spindle at the bud neck during cell division. Targets cytoplasmic dynein to microtubule plus ends, thereby promoting dynein-mediated microtubule sliding along the bud cortex and consequently the movement of the mitotic spindle to the bud neck. The protein is Nuclear distribution protein PAC1 of Zygosaccharomyces rouxii (strain ATCC 2623 / CBS 732 / NBRC 1130 / NCYC 568 / NRRL Y-229).